Reading from the N-terminus, the 128-residue chain is MLMLLCIIATVIPFSLVEGRKGCWADPTPPGKECLYGKEIHGGRNLGIHYIFTSKFTRICCQALECQYWGLCRFKDVWCGQSVSGVPIKANALLWGQRDVEPIMRCYDSRGAGAYYSFTVQVVPIEDR.

The signal sequence occupies residues 1–19 (MLMLLCIIATVIPFSLVEG).

Component of the acid-insoluble organic matrix of the calcified shell.

The protein localises to the secreted. This chain is Insoluble matrix shell protein 3, found in Ruditapes philippinarum (Japanese carpet shell).